Reading from the N-terminus, the 594-residue chain is ATP-dependent lipid A-core flippase (594 aa).

Helical transmembrane passes span 35 to 55 (FVLA…IPKV), 64 to 84 (FGGS…GVAL), 135 to 155 (AVIF…ITLV), 161 to 181 (VVAL…VVAV), 262 to 282 (VTAF…MIQA), and 289 to 309 (IGGF…LKHL). The ABC transmembrane type-1 domain occupies 36–318 (VLAIIAMGLV…LADLNQPLQR (283 aa)). One can recognise an ABC transporter domain in the interval 350–588 (LVFDNVGFRY…NGLYAGLHRI (239 aa)). 384-391 (GPSGSGKT) provides a ligand contact to ATP.

Belongs to the ABC transporter superfamily. Lipid exporter (TC 3.A.1.106) family. Homodimer.

It is found in the cell inner membrane. The enzyme catalyses ATP + H2O + lipid A-core oligosaccharideSide 1 = ADP + phosphate + lipid A-core oligosaccharideSide 2.. Functionally, involved in lipopolysaccharide (LPS) biosynthesis. Translocates lipid A-core from the inner to the outer leaflet of the inner membrane. Transmembrane domains (TMD) form a pore in the inner membrane and the ATP-binding domain (NBD) is responsible for energy generation. In Cupriavidus metallidurans (strain ATCC 43123 / DSM 2839 / NBRC 102507 / CH34) (Ralstonia metallidurans), this protein is ATP-dependent lipid A-core flippase.